The primary structure comprises 274 residues: Undecaprenyl-diphosphatase (274 aa).

The next 6 membrane-spanning stretches (helical) occupy residues 44-64 (AKVF…LVYW), 85-105 (LNVV…GKMI), 109-129 (LFIP…ILWA), 185-205 (ATDF…AYSL), 214-234 (VADI…AWLC), and 247-267 (FIPF…TAWT).

The protein belongs to the UppP family.

It localises to the cell inner membrane. The catalysed reaction is di-trans,octa-cis-undecaprenyl diphosphate + H2O = di-trans,octa-cis-undecaprenyl phosphate + phosphate + H(+). Its function is as follows. Catalyzes the dephosphorylation of undecaprenyl diphosphate (UPP). Confers resistance to bacitracin. The chain is Undecaprenyl-diphosphatase from Variovorax paradoxus (strain S110).